The sequence spans 128 residues: Gene 64 protein (128 aa).

The chain is Gene 64 protein (64) from Mycobacterium phage L5 (Mycobacteriophage L5).